A 329-amino-acid chain; its full sequence is Beta-ketoacyl-[acyl-carrier-protein] synthase III (329 aa).

Residues Cys-113 and His-255 contribute to the active site. Residues Gln-256 to Arg-260 form an ACP-binding region. Asn-285 is a catalytic residue.

Belongs to the thiolase-like superfamily. FabH family. Homodimer.

It localises to the cytoplasm. It catalyses the reaction malonyl-[ACP] + acetyl-CoA + H(+) = 3-oxobutanoyl-[ACP] + CO2 + CoA. Its pathway is lipid metabolism; fatty acid biosynthesis. Functionally, catalyzes the condensation reaction of fatty acid synthesis by the addition to an acyl acceptor of two carbons from malonyl-ACP. Catalyzes the first condensation reaction which initiates fatty acid synthesis and may therefore play a role in governing the total rate of fatty acid production. Possesses both acetoacetyl-ACP synthase and acetyl transacylase activities. Its substrate specificity determines the biosynthesis of branched-chain and/or straight-chain of fatty acids. The chain is Beta-ketoacyl-[acyl-carrier-protein] synthase III from Chlorobium phaeovibrioides (strain DSM 265 / 1930) (Prosthecochloris vibrioformis (strain DSM 265)).